Here is an 825-residue protein sequence, read N- to C-terminus: Arabinolytic transcriptional activator araR (825 aa).

The segment covering 1-17 has biased composition (polar residues); the sequence is MASSHQGNGTVPNSQTD. A disordered region spans residues 1–28; it reads MASSHQGNGTVPNSQTDAPPDSSTKRRW. The segment at residues 35–61 is a DNA-binding region (zn(2)-C6 fungal-type); that stretch reads CDSCHARRVRCDRQFPCSRCLRSEITC. A disordered region spans residues 117 to 152; the sequence is STFHHRSPPANAPTVSAPSVDGRRSQTDPQLPVRRP.

It belongs to the xlnR/xlr1 family. araR subfamily.

It is found in the nucleus. Transcriptional activator of the arabinanolytic system. Involved in the regulation of extracellular arabinanolytic genes and in the regulation of the intracellular activities of L-arabinose catabolic genes in the pentose catabolic pathway (PCP) in response to the presence of L-arabinose. The chain is Arabinolytic transcriptional activator araR from Emericella nidulans (strain FGSC A4 / ATCC 38163 / CBS 112.46 / NRRL 194 / M139) (Aspergillus nidulans).